Consider the following 418-residue polypeptide: Histidinol dehydrogenase (418 aa).

Y119, Q180, and N203 together coordinate NAD(+). Positions 226, 248, and 251 each coordinate substrate. Zn(2+) is bound by residues Q248 and H251. Residues E316 and H317 each act as proton acceptor in the active site. Substrate is bound by residues H317, D350, E404, and H409. D350 is a binding site for Zn(2+). A Zn(2+)-binding site is contributed by H409.

This sequence belongs to the histidinol dehydrogenase family. It depends on Zn(2+) as a cofactor.

The catalysed reaction is L-histidinol + 2 NAD(+) + H2O = L-histidine + 2 NADH + 3 H(+). Its pathway is amino-acid biosynthesis; L-histidine biosynthesis; L-histidine from 5-phospho-alpha-D-ribose 1-diphosphate: step 9/9. Its function is as follows. Catalyzes the sequential NAD-dependent oxidations of L-histidinol to L-histidinaldehyde and then to L-histidine. The chain is Histidinol dehydrogenase from Staphylococcus aureus (strain COL).